Consider the following 251-residue polypeptide: MAKKEHVELVPIFDDNYVFILTDDATQKAVAVDPGDAGPVIDFLRANKLDLAAILLTHHHSDHIGGVGELKAAFDCPVYAPQKNQKQIPVADQWLKEGDSVTCGPWDFTVMELPGHTLGHIAYWNQKHKWLFSGDVIFGLGCGRLFEGTFEQGYESLQRIKKLPPQTLIYCTHEYTKSNLEFCRILTNQDNTPITGDSEALELYANELSNRRELNLPSVPLKLSIEESVNPFLLARDVEQFRYLRELRNRQ.

Zn(2+)-binding residues include His58, His60, Asp62, His63, His116, Asp135, and His173.

It belongs to the metallo-beta-lactamase superfamily. Glyoxalase II family. In terms of assembly, monomer. Requires Zn(2+) as cofactor.

It catalyses the reaction an S-(2-hydroxyacyl)glutathione + H2O = a 2-hydroxy carboxylate + glutathione + H(+). Its pathway is secondary metabolite metabolism; methylglyoxal degradation; (R)-lactate from methylglyoxal: step 2/2. Its function is as follows. Thiolesterase that catalyzes the hydrolysis of S-D-lactoyl-glutathione to form glutathione and D-lactic acid. The sequence is that of Hydroxyacylglutathione hydrolase from Bdellovibrio bacteriovorus (strain ATCC 15356 / DSM 50701 / NCIMB 9529 / HD100).